Here is a 270-residue protein sequence, read N- to C-terminus: D-aminoacyl-tRNA deacylase (270 aa).

Belongs to the DtdA deacylase family. Monomer. Zn(2+) serves as cofactor.

The enzyme catalyses a D-aminoacyl-tRNA + H2O = a tRNA + a D-alpha-amino acid + H(+). It carries out the reaction glycyl-tRNA(Ala) + H2O = tRNA(Ala) + glycine + H(+). D-aminoacyl-tRNA deacylase with broad substrate specificity. By recycling D-aminoacyl-tRNA to D-amino acids and free tRNA molecules, this enzyme counteracts the toxicity associated with the formation of D-aminoacyl-tRNA entities in vivo. The polypeptide is D-aminoacyl-tRNA deacylase (Pyrococcus furiosus (strain ATCC 43587 / DSM 3638 / JCM 8422 / Vc1)).